Here is a 232-residue protein sequence, read N- to C-terminus: EEF1A lysine methyltransferase 3 (232 aa).

Residues W57, 83–85 (GAG), D104, W133, and A150 each bind S-adenosyl-L-methionine.

It belongs to the methyltransferase superfamily. METTL21 family. Interacts with members of the heat shock protein 70 and 90 families and of the TCP-1 chaperonin family, as well as with HSPD1, STIP1 and tubulin; at least some of these proteins may be methylation substrates.

The protein localises to the cytoplasm. It localises to the cytoskeleton. Its subcellular location is the microtubule organizing center. The protein resides in the centrosome. It catalyses the reaction L-lysyl-[protein] + 3 S-adenosyl-L-methionine = N(6),N(6),N(6)-trimethyl-L-lysyl-[protein] + 3 S-adenosyl-L-homocysteine + 3 H(+). The catalysed reaction is L-lysyl-[protein] + S-adenosyl-L-methionine = N(6)-methyl-L-lysyl-[protein] + S-adenosyl-L-homocysteine + H(+). It carries out the reaction N(6)-methyl-L-lysyl-[protein] + S-adenosyl-L-methionine = N(6),N(6)-dimethyl-L-lysyl-[protein] + S-adenosyl-L-homocysteine + H(+). The enzyme catalyses N(6),N(6)-dimethyl-L-lysyl-[protein] + S-adenosyl-L-methionine = N(6),N(6),N(6)-trimethyl-L-lysyl-[protein] + S-adenosyl-L-homocysteine + H(+). In terms of biological role, protein-lysine methyltransferase that selectively mono-, di- and trimethylates 'Lys-165' of the translation elongation factors EEF1A1 and EEF1A2 in an aminoacyl-tRNA and GTP-dependent manner. EEF1A1 methylation by EEF1AKMT3 is dynamic as well as inducible by stress conditions, such as ER-stress, and plays a regulatory role on mRNA translation. This Mus musculus (Mouse) protein is EEF1A lysine methyltransferase 3.